Here is a 678-residue protein sequence, read N- to C-terminus: Platelet endothelial cell adhesion molecule (678 aa).

A signal peptide spans 1-17; sequence MLLALLLTMLLYASLQA. Residues 18–589 lie on the Extracellular side of the membrane; the sequence is QENSFTINSI…VRVFLAPWKK (572 aa). Ig-like C2-type domains lie at 40–126, 135–213, 225–309, 315–391, 413–472, and 488–577; these read GQKL…PEVT, GGIV…FIRS, PKFQ…ILVN, PRPK…LVPV, GQII…NCHS, and PVDE…RSGP. A disulfide bridge links Cys47 with Cys99. N-linked (GlcNAc...) asparagine glycans are attached at residues Asn74 and Asn141. 2 disulfides stabilise this stretch: Cys142–Cys195 and Cys245–Cys293. 5 N-linked (GlcNAc...) asparagine glycosylation sites follow: Asn309, Asn345, Asn360, Asn424, and Asn540. Cystine bridges form between Cys336–Cys375, Cys420–Cys465, and Cys512–Cys561. Residues 590 to 610 traverse the membrane as a helical segment; it reads GLIAVVVIGVVIAALIVAAKY. At 611–678 the chain is on the cytoplasmic side; that stretch reads YFLRKAKAKQ…EPHQENGRLP (68 aa). The tract at residues 634–653 is disordered; sequence NSNSEKVSEPSVETNSHYDS. The ITIM motif signature appears at 658–663; that stretch reads VEYTEV. The residue at position 660 (Tyr660) is a Phosphotyrosine; by FER.

In terms of assembly, trans-homodimer (via Ig-like C2-type 1 and Ig-like C2-type 2 domains); trans-homodimerization is required for cell-cell interaction. Forms a complex with BDKRB2 and GNAQ. Interacts with BDKRB2 and GNAQ. Interacts with PTPN11. Interacts with FER. Interacts with CD177; the interaction is Ca(2+)-dependent; the interaction is direct. Post-translationally, phosphorylated on Ser and Tyr residues after cellular activation. In endothelial cells Fyn mediates mechanical-force (stretch or pull) induced tyrosine phosphorylation. Phosphorylated on tyrosine residues by FER and FES in response to FCER1 activation. Palmitoylation by ZDHHC21 is necessary for cell surface expression in endothelial cells and enrichment in membrane rafts.

The protein localises to the cell membrane. It localises to the membrane raft. Its subcellular location is the cell junction. In terms of biological role, cell adhesion molecule which is required for leukocyte transendothelial migration (TEM) under most inflammatory conditions. Tyr-660 plays a critical role in TEM and is required for efficient trafficking of PECAM1 to and from the lateral border recycling compartment (LBRC) and is also essential for the LBRC membrane to be targeted around migrating leukocytes. Trans-homophilic interaction may play a role in endothelial cell-cell adhesion via cell junctions. Heterophilic interaction with CD177 plays a role in transendothelial migration of neutrophils. Homophilic ligation of PECAM1 prevents macrophage-mediated phagocytosis of neighboring viable leukocytes by transmitting a detachment signal. Promotes macrophage-mediated phagocytosis of apoptotic leukocytes by tethering them to the phagocytic cells; PECAM1-mediated detachment signal appears to be disabled in apoptotic leukocytes. Modulates bradykinin receptor BDKRB2 activation. Regulates bradykinin- and hyperosmotic shock-induced ERK1/2 activation in endothelial cells. Induces susceptibility to atherosclerosis. The sequence is that of Platelet endothelial cell adhesion molecule (Pecam1) from Rattus norvegicus (Rat).